The following is a 180-amino-acid chain: 4-hydroxy-3-methylbut-2-enyl diphosphate reductase (180 aa).

Residue C12 coordinates [4Fe-4S] cluster. 2 residues coordinate (2E)-4-hydroxy-3-methylbut-2-enyl diphosphate: H41 and H74. 2 residues coordinate dimethylallyl diphosphate: H41 and H74. Residues H41 and H74 each coordinate isopentenyl diphosphate. A [4Fe-4S] cluster-binding site is contributed by C96. H124 is a binding site for (2E)-4-hydroxy-3-methylbut-2-enyl diphosphate. H124 provides a ligand contact to dimethylallyl diphosphate. An isopentenyl diphosphate-binding site is contributed by H124. E126 functions as the Proton donor in the catalytic mechanism. Position 168 (T168) interacts with (2E)-4-hydroxy-3-methylbut-2-enyl diphosphate.

This sequence belongs to the IspH family. [4Fe-4S] cluster is required as a cofactor.

It carries out the reaction isopentenyl diphosphate + 2 oxidized [2Fe-2S]-[ferredoxin] + H2O = (2E)-4-hydroxy-3-methylbut-2-enyl diphosphate + 2 reduced [2Fe-2S]-[ferredoxin] + 2 H(+). The catalysed reaction is dimethylallyl diphosphate + 2 oxidized [2Fe-2S]-[ferredoxin] + H2O = (2E)-4-hydroxy-3-methylbut-2-enyl diphosphate + 2 reduced [2Fe-2S]-[ferredoxin] + 2 H(+). The protein operates within isoprenoid biosynthesis; dimethylallyl diphosphate biosynthesis; dimethylallyl diphosphate from (2E)-4-hydroxy-3-methylbutenyl diphosphate: step 1/1. It functions in the pathway isoprenoid biosynthesis; isopentenyl diphosphate biosynthesis via DXP pathway; isopentenyl diphosphate from 1-deoxy-D-xylulose 5-phosphate: step 6/6. Catalyzes the conversion of 1-hydroxy-2-methyl-2-(E)-butenyl 4-diphosphate (HMBPP) into a mixture of isopentenyl diphosphate (IPP) and dimethylallyl diphosphate (DMAPP). Acts in the terminal step of the DOXP/MEP pathway for isoprenoid precursor biosynthesis. The polypeptide is 4-hydroxy-3-methylbut-2-enyl diphosphate reductase (Pseudomonas fluorescens).